Here is a 307-residue protein sequence, read N- to C-terminus: Porphobilinogen deaminase (307 aa).

Cys239 carries the S-(dipyrrolylmethanemethyl)cysteine modification.

This sequence belongs to the HMBS family. As to quaternary structure, monomer. Dipyrromethane is required as a cofactor.

The catalysed reaction is 4 porphobilinogen + H2O = hydroxymethylbilane + 4 NH4(+). It participates in porphyrin-containing compound metabolism; protoporphyrin-IX biosynthesis; coproporphyrinogen-III from 5-aminolevulinate: step 2/4. In terms of biological role, tetrapolymerization of the monopyrrole PBG into the hydroxymethylbilane pre-uroporphyrinogen in several discrete steps. This Campylobacter jejuni subsp. doylei (strain ATCC BAA-1458 / RM4099 / 269.97) protein is Porphobilinogen deaminase.